A 313-amino-acid chain; its full sequence is Ribonuclease HIII (313 aa).

In terms of domain architecture, RNase H type-2 spans 94–310 (MSVIGSDEVG…TQKAKRLVER (217 aa)). Residues Asp-100, Glu-101, and Asp-205 each coordinate a divalent metal cation.

Belongs to the RNase HII family. RnhC subfamily. It depends on Mn(2+) as a cofactor. Requires Mg(2+) as cofactor.

The protein localises to the cytoplasm. The enzyme catalyses Endonucleolytic cleavage to 5'-phosphomonoester.. Its function is as follows. Endonuclease that specifically degrades the RNA of RNA-DNA hybrids. This is Ribonuclease HIII from Bacillus velezensis (strain DSM 23117 / BGSC 10A6 / LMG 26770 / FZB42) (Bacillus amyloliquefaciens subsp. plantarum).